The primary structure comprises 615 residues: Increased rDNA silencing protein 4 (615 aa).

Disordered regions lie at residues 38-135, 152-260, 277-304, and 323-445; these read SNEV…SSHS, LLGI…NRSQ, PSIA…NYSS, and KPKH…NEDK. Residues 50–65 are compositionally biased toward polar residues; sequence VSRNPQTRLSEPSLQK. 2 stretches are compositionally biased toward low complexity: residues 121–135 and 157–168; these read HSQS…SSHS and SRSSSRNGSNES. Phosphoserine is present on serine 180. A compositionally biased stretch (low complexity) spans 184–198; sequence LLTSFSSGRRLSSSS. Positions 248-260 are enriched in polar residues; that stretch reads NPDTSDVISNRSQ. Residues 281–290 show a composition bias toward low complexity; it reads SSNTTTTTSN. Basic and acidic residues predominate over residues 365-377; it reads ENDHASSLHEGNL. Residues 389-402 show a composition bias toward acidic residues; it reads DVYDDTDSDSESDQ. The span at 409-438 shows a compositional bias: basic residues; that stretch reads KPRKRDRIKRKIRNSANKTAHHRPIHRTRD. In terms of domain architecture, EH spans 460–571; it reads ERKRYESMWV…QCVWDSVDRY (112 aa).

Belongs to the IRS4 family. In terms of assembly, interacts with INP51.

In terms of biological role, with TAX4, acts as a positive regulator of INP51 activity and phosphatidylinositol 4,5-bisphosphate turnover. Negatively regulates signaling through the cell integrity pathway, including the MAP kinase SLT2. Also seems to be involved in rDNA silencing. This chain is Increased rDNA silencing protein 4 (IRS4), found in Saccharomyces cerevisiae (strain YJM789) (Baker's yeast).